A 217-amino-acid chain; its full sequence is MQNRLQELLTRIGLSLEKPVCDRLLWYLDEMLRWNRRINLTAIENKEEALEKHLLDSLTVVPLLRGDERLLDMGSGAGLPSIPIKIARPQMCVLSVDSVHKKIVFQQHVARQLKLQGFEARACRIQSLSQGESETSFDVVTARALTHLSDLLSMAEPLLNDKGRLIAMKGPDGEAELAECAQQIRKAGFVAEPLQHLSLPLSGSERTLVVLKRKPGR.

Residues G74, L79, I125–Q126, and R143 each bind S-adenosyl-L-methionine.

The protein belongs to the methyltransferase superfamily. RNA methyltransferase RsmG family.

The protein localises to the cytoplasm. The catalysed reaction is guanosine(527) in 16S rRNA + S-adenosyl-L-methionine = N(7)-methylguanosine(527) in 16S rRNA + S-adenosyl-L-homocysteine. Specifically methylates the N7 position of guanine in position 527 of 16S rRNA. This is Ribosomal RNA small subunit methyltransferase G from Syntrophotalea carbinolica (strain DSM 2380 / NBRC 103641 / GraBd1) (Pelobacter carbinolicus).